The chain runs to 432 residues: Transcriptional adapter 3 (432 aa).

Residue lysine 21 forms a Glycyl lysine isopeptide (Lys-Gly) (interchain with G-Cter in SUMO2) linkage. The stretch at 40-69 (IEELDTLQLELETLLSSASRRLRVLEAETQ) forms a coiled coil. The disordered stretch occupies residues 87-127 (ARDHELGAPPKHGKPKKQKLEGKTGHGPGPGPGRPKSKNVQ). Lysine 129 is covalently cross-linked (Glycyl lysine isopeptide (Lys-Gly) (interchain with G-Cter in SUMO2)). A disordered region spans residues 272–319 (NIISPMEDSPIPDMSGKESGADGASTSPRNQNKPFSVPHTKSLESRIK). Serine 280 and serine 298 each carry phosphoserine. The segment covering 295–305 (ASTSPRNQNKP) has biased composition (polar residues). A coiled-coil region spans residues 367-407 (LLRLAKEEVSRQELRQRVRMADNEVMDAFRKIMAARQKKRT). Lysine 418 is subject to N6-acetyllysine.

Belongs to the NGG1 family. As to quaternary structure, the PCAF complex is composed of a number of TBP-associated factors (TAFS), such as TAF5, TAF5L, TAF6, TAF6L, TAF9, TAF10 and TAF12, PCAF, and also PCAF-associated factors (PAFs), such as TADA2L/ADA2, TADA3L/ADA3 and SPT3. Interacts directly with TADA2L and PCAF and also with the high-risk HPV oncoprotein E6. Component of the STAGA transcription coactivator-HAT complex, at least composed of SUPT3H, GCN5L2, TAF5L, TAF6L, SUPT7L, TADA3L, TAD1L, TAF10, TAF12, TRRAP and TAF9. Component of the TFTC-HAT complex. Component of the ADA2A-containing complex (ATAC), composed of KAT14, KAT2A, TADA2L, TADA3L, ZZ3, MBIP, WDR5, YEATS2, CCDC101 and DR1.

Its subcellular location is the nucleus. Its function is as follows. Functions as a component of the PCAF complex. The PCAF complex is capable of efficiently acetylating histones in a nucleosomal context. The PCAF complex could be considered as the human version of the yeast SAGA complex. Also known as a coactivator for p53/TP53-dependent transcriptional activation. Component of the ATAC complex, a complex with histone acetyltransferase activity on histones H3 and H4. In Rattus norvegicus (Rat), this protein is Transcriptional adapter 3 (Tada3).